A 369-amino-acid polypeptide reads, in one-letter code: Isopentenyl-diphosphate delta-isomerase (369 aa).

Residue 9 to 10 (RK) participates in substrate binding. FMN contacts are provided by residues Thr-65, 66 to 68 (GMT), Ser-96, and Asn-125. Residue 96–98 (SQR) participates in substrate binding. A substrate-binding site is contributed by Gln-160. Residue Glu-161 participates in Mg(2+) binding. Residues Lys-193, Ser-218, Thr-223, 275–277 (GVR), and 296–297 (AL) each bind FMN.

Belongs to the IPP isomerase type 2 family. Homooctamer. Dimer of tetramers. FMN serves as cofactor. Requires NADPH as cofactor. The cofactor is Mg(2+).

It localises to the cytoplasm. The catalysed reaction is isopentenyl diphosphate = dimethylallyl diphosphate. In terms of biological role, involved in the biosynthesis of isoprenoids. Catalyzes the 1,3-allylic rearrangement of the homoallylic substrate isopentenyl (IPP) to its allylic isomer, dimethylallyl diphosphate (DMAPP). This is Isopentenyl-diphosphate delta-isomerase from Sulfurisphaera tokodaii (strain DSM 16993 / JCM 10545 / NBRC 100140 / 7) (Sulfolobus tokodaii).